We begin with the raw amino-acid sequence, 414 residues long: Multifunctional CCA protein (414 aa).

G8 and R11 together coordinate ATP. Positions 8 and 11 each coordinate CTP. Mg(2+) is bound by residues D21 and D23. R91, R137, and R140 together coordinate ATP. The CTP site is built by R91, R137, and R140. The HD domain maps to 228–329 (TGIHTLLTLA…LKLLDTIDVW (102 aa)).

Belongs to the tRNA nucleotidyltransferase/poly(A) polymerase family. Bacterial CCA-adding enzyme type 1 subfamily. As to quaternary structure, monomer. Can also form homodimers and oligomers. The cofactor is Mg(2+). Ni(2+) serves as cofactor.

The catalysed reaction is a tRNA precursor + 2 CTP + ATP = a tRNA with a 3' CCA end + 3 diphosphate. It carries out the reaction a tRNA with a 3' CCA end + 2 CTP + ATP = a tRNA with a 3' CCACCA end + 3 diphosphate. In terms of biological role, catalyzes the addition and repair of the essential 3'-terminal CCA sequence in tRNAs without using a nucleic acid template. Adds these three nucleotides in the order of C, C, and A to the tRNA nucleotide-73, using CTP and ATP as substrates and producing inorganic pyrophosphate. tRNA 3'-terminal CCA addition is required both for tRNA processing and repair. Also involved in tRNA surveillance by mediating tandem CCA addition to generate a CCACCA at the 3' terminus of unstable tRNAs. While stable tRNAs receive only 3'-terminal CCA, unstable tRNAs are marked with CCACCA and rapidly degraded. The sequence is that of Multifunctional CCA protein from Edwardsiella ictaluri (strain 93-146).